The primary structure comprises 950 residues: Xylosyltransferase 1 (950 aa).

The Cytoplasmic segment spans residues 1–17; sequence MVAAPSARRLVRRSHSA. The chain crosses the membrane as a helical; Signal-anchor for type II membrane protein span at residues 18-38; that stretch reads LLAALTVLLLQTLVGWNFSSL. Topologically, residues 39–950 are lumenal; that stretch reads HSGAGERRGG…GAVKPDGRLR (912 aa). The disordered stretch occupies residues 42-246; it reads AGERRGGAAA…ELRYDQPPKC (205 aa). Over residues 91–104 the composition is skewed to low complexity; the sequence is PPARARARALAGCP. A compositionally biased stretch (basic and acidic residues) spans 134–150; the sequence is KVRTDSNNENSVPKDFE. Over residues 152 to 161 the composition is skewed to polar residues; sequence VDNSNFAPRT. Residues 166-193 show a composition bias toward basic and acidic residues; it reads HQPELAKKPPSRQKELLKRRLEQEEKGK. A glycan (N-linked (GlcNAc...) asparagine) is linked at asparagine 215. Disulfide bonds link cysteine 246–cysteine 274, cysteine 290–cysteine 531, cysteine 550–cysteine 563, and cysteine 552–cysteine 561. UDP-alpha-D-xylose is bound by residues valine 322, aspartate 350, and 379–381; that span reads TIW. An N-linked (GlcNAc...) asparagine glycan is attached at asparagine 410. Residue 483–484 coordinates UDP-alpha-D-xylose; it reads DW. UDP-alpha-D-xylose is bound by residues serine 564 and 587-588; that span reads RK. 2 cysteine pairs are disulfide-bonded: cysteine 664/cysteine 918 and cysteine 911/cysteine 924. N-linked (GlcNAc...) asparagine glycosylation is present at asparagine 768. The segment at 931–950 is disordered; sequence SFSPDPKSELGAVKPDGRLR.

It belongs to the glycosyltransferase 14 family. XylT subfamily. As to quaternary structure, monomer. Requires a divalent metal cation as cofactor. In terms of processing, contains 7 disulfide bonds. Post-translationally, N-glycosylated.

It localises to the golgi apparatus membrane. The catalysed reaction is UDP-alpha-D-xylose + L-seryl-[protein] = 3-O-(beta-D-xylosyl)-L-seryl-[protein] + UDP + H(+). It participates in glycan metabolism; chondroitin sulfate biosynthesis. The protein operates within glycan metabolism; heparan sulfate biosynthesis. Catalyzes the first step in the biosynthesis of chondroitin sulfate and dermatan sulfate proteoglycans, such as DCN. Transfers D-xylose from UDP-D-xylose to specific serine residues of the core protein. Required for normal maturation of chondrocytes during bone development, normal onset of ossification and normal embryonic and postnatal skeleton development, especially of the long bones. The sequence is that of Xylosyltransferase 1 (XYLT1) from Canis lupus familiaris (Dog).